An 887-amino-acid chain; its full sequence is Centrobin (887 aa).

Residues 1–34 form a disordered region; that stretch reads MATAAPSPSSPLRPEDLLSDSSEPPGLNQVSSEV. Residue Ser-81 is modified to Phosphoserine. Disordered regions lie at residues 110–153, 465–486, 566–591, and 636–695; these read MLHT…PSSS, SLRQAASLRDHHRKQLQELSGQ, TLLPPNPQAPLAEPSSPGPLEPEKGE, and LGPP…LPPA. Residues 113-128 are compositionally biased toward basic and acidic residues; the sequence is TSRDTAYRTGSERREE. A compositionally biased stretch (polar residues) spans 133 to 153; it reads SDSTATLLNTRPLQDLSPSSS. A coiled-coil region spans residues 191–557; it reads RRKHCERHIQ…LQAMLQAHWE (367 aa). A required for centrosome localization region spans residues 360–887; sequence QEHQLKERLQ…SMRSRGGIWR (528 aa). Residues 670–680 are compositionally biased toward basic and acidic residues; it reads TDDHRAERPFP. Phosphoserine is present on Ser-782. The segment at 824 to 887 is disordered; sequence GTDGQGELVP…SMRSRGGIWR (64 aa). Positions 832 to 849 are enriched in basic and acidic residues; the sequence is VPRRNTDSRLGETTRKEI.

Interacts with LYST.

It is found in the cytoplasm. The protein localises to the cytoskeleton. The protein resides in the microtubule organizing center. It localises to the centrosome. Its subcellular location is the centriole. In terms of biological role, required for centriole duplication. Inhibition of centriole duplication leading to defects in cytokinesis. This is Centrobin (Cntrob) from Mus musculus (Mouse).